Here is a 336-residue protein sequence, read N- to C-terminus: Dihydroorotate dehydrogenase (quinone) (336 aa).

FMN contacts are provided by residues 62-66 (AGLDK) and threonine 86. Lysine 66 is a substrate binding site. 111-115 (NRMGF) contacts substrate. FMN-binding residues include asparagine 139 and asparagine 172. A substrate-binding site is contributed by asparagine 172. The Nucleophile role is filled by serine 175. Asparagine 177 serves as a coordination point for substrate. FMN contacts are provided by lysine 217 and threonine 245. 246–247 (NT) is a binding site for substrate. Residues glycine 268, glycine 297, and 318–319 (YS) contribute to the FMN site.

The protein belongs to the dihydroorotate dehydrogenase family. Type 2 subfamily. In terms of assembly, monomer. FMN serves as cofactor.

Its subcellular location is the cell membrane. It carries out the reaction (S)-dihydroorotate + a quinone = orotate + a quinol. The protein operates within pyrimidine metabolism; UMP biosynthesis via de novo pathway; orotate from (S)-dihydroorotate (quinone route): step 1/1. Catalyzes the conversion of dihydroorotate to orotate with quinone as electron acceptor. The sequence is that of Dihydroorotate dehydrogenase (quinone) from Shigella dysenteriae serotype 1 (strain Sd197).